We begin with the raw amino-acid sequence, 156 residues long: VapC ribonuclease AF_1683 (156 aa).

The PINc domain occupies 4-125 (LIDTGIFFGF…KLISYDSRFS (122 aa)). Asp6 and Asp103 together coordinate Mg(2+).

This sequence belongs to the PINc/VapC protein family. Mg(2+) is required as a cofactor.

Toxic component of a type II toxin-antitoxin (TA) system. An RNase. This chain is VapC ribonuclease AF_1683, found in Archaeoglobus fulgidus (strain ATCC 49558 / DSM 4304 / JCM 9628 / NBRC 100126 / VC-16).